The sequence spans 256 residues: MAEQIDLKTFKTDVADYEAARPEYPIGITDWITDEFLIDETSIILELGAGTGKFTPRIIASHPKEIIAVDVYPEMLDVLRKKFPNVDCRAGSAMAIPLEDESVDLVLCAQCFHWFANEEAMKEIYRVLKPNGKLGLVWNTRDDTVPWIEKVSKILGRYRKDAPSFVSWKWAELFPGHGFGKLRYCAFPFSRCLTVEELHTLMNSFSFIYKLPEEEKEKVHAELDEIAKTIPRVQNTDQIKLCYQTMAFSSEKEPAK.

This sequence belongs to the methyltransferase superfamily.

Its subcellular location is the cytoplasm. It localises to the nucleus. In terms of biological role, probable methyltransferase. This is an uncharacterized protein from Schizosaccharomyces pombe (strain 972 / ATCC 24843) (Fission yeast).